The sequence spans 327 residues: Thiamine-binding periplasmic protein (327 aa).

Residues 1-18 (MLKKYLPLLLLCAAPAFA) form the signal peptide. Thiamine contacts are provided by residues 59–60 (DG), 161–162 (ST), tryptophan 197, and 215–218 (YTTS).

It belongs to the bacterial solute-binding protein 1 family. As to quaternary structure, the complex is composed of two ATP-binding proteins (ThiQ), two transmembrane proteins (ThiP) and a solute-binding protein (ThiB).

It localises to the periplasm. In terms of biological role, part of the ABC transporter complex ThiBPQ involved in thiamine import. Is also involved in thiamine pyrophosphate transport. In Salmonella typhimurium (strain LT2 / SGSC1412 / ATCC 700720), this protein is Thiamine-binding periplasmic protein.